A 172-amino-acid chain; its full sequence is Adenine phosphoribosyltransferase (172 aa).

The protein belongs to the purine/pyrimidine phosphoribosyltransferase family. Homodimer.

It is found in the cytoplasm. The enzyme catalyses AMP + diphosphate = 5-phospho-alpha-D-ribose 1-diphosphate + adenine. The protein operates within purine metabolism; AMP biosynthesis via salvage pathway; AMP from adenine: step 1/1. Catalyzes a salvage reaction resulting in the formation of AMP, that is energically less costly than de novo synthesis. In Prochlorococcus marinus (strain MIT 9313), this protein is Adenine phosphoribosyltransferase.